Reading from the N-terminus, the 307-residue chain is Transmembrane and coiled-coil domain-containing protein 5B (307 aa).

Positions 20–212 (TLEAIKQNLK…SKAQNDSSQV (193 aa)) form a coiled coil. Residues 246–268 (YLFFMVMIVIRLLGYVFFHLQYV) traverse the membrane as a helical segment.

Belongs to the TMCO5 family.

It localises to the membrane. The protein is Transmembrane and coiled-coil domain-containing protein 5B (Tmco5b) of Mus musculus (Mouse).